Consider the following 450-residue polypeptide: Benzene 1,2-dioxygenase subunit alpha (450 aa).

Positions 56-163 (LLGHETHIRK…VETYKGLIFA (108 aa)) constitute a Rieske domain. 4 residues coordinate [2Fe-2S] cluster: cysteine 96, histidine 98, cysteine 116, and histidine 119. The Fe cation site is built by histidine 222 and histidine 228.

The protein belongs to the bacterial ring-hydroxylating dioxygenase alpha subunit family. As to quaternary structure, this dioxygenase system consists of four proteins: the two subunits of the hydroxylase component (BedC1 and BedC2), a ferredoxin (BedB) and a ferredoxin reductase (BedA). The cofactor is [2Fe-2S] cluster. Fe cation is required as a cofactor.

It carries out the reaction benzene + NADH + O2 + H(+) = cis-1,2-dihydrobenzene-1,2-diol + NAD(+). It functions in the pathway aromatic compound metabolism; benzene degradation; catechol from benzene: step 1/2. This is Benzene 1,2-dioxygenase subunit alpha (bedC1) from Pseudomonas putida (Arthrobacter siderocapsulatus).